We begin with the raw amino-acid sequence, 289 residues long: 4-diphosphocytidyl-2-C-methyl-D-erythritol kinase (289 aa).

Residue lysine 10 is part of the active site. 94–104 (PVAAGLAGGSS) is an ATP binding site. Aspartate 136 is a catalytic residue.

Belongs to the GHMP kinase family. IspE subfamily.

It catalyses the reaction 4-CDP-2-C-methyl-D-erythritol + ATP = 4-CDP-2-C-methyl-D-erythritol 2-phosphate + ADP + H(+). It participates in isoprenoid biosynthesis; isopentenyl diphosphate biosynthesis via DXP pathway; isopentenyl diphosphate from 1-deoxy-D-xylulose 5-phosphate: step 3/6. Catalyzes the phosphorylation of the position 2 hydroxy group of 4-diphosphocytidyl-2C-methyl-D-erythritol. In Bacillus mycoides (strain KBAB4) (Bacillus weihenstephanensis), this protein is 4-diphosphocytidyl-2-C-methyl-D-erythritol kinase.